Here is a 647-residue protein sequence, read N- to C-terminus: LIM domain kinase 1 (647 aa).

LIM zinc-binding domains lie at 25–75 (CASC…CKKD) and 84–137 (CHGC…CGQC). The PDZ domain occupies 165–258 (LVSIPASAHG…LLQLTLEHDP (94 aa)). Position 210 is a phosphoserine (Ser-210). Position 229 is a phosphothreonine (Thr-229). The segment at 256-319 (HDPHDSLGHG…SPASQRKDLG (64 aa)) is disordered. Over residues 266–277 (PVSDPSPLSSPV) the composition is skewed to low complexity. Composition is skewed to polar residues over residues 278-289 (HTPSGQAASSAR) and 298-313 (SIDT…SPAS). Ser-298, Ser-302, Ser-307, and Ser-310 each carry phosphoserine. Position 323 is a phosphoserine; by MAPKAPK2 (Ser-323). Ser-337 carries the post-translational modification Phosphoserine. Positions 339–604 (LIHGEVLGKG…PSFVKLEQWL (266 aa)) constitute a Protein kinase domain. ATP-binding positions include 345–353 (LGKGCFGQA) and Lys-368. Asp-460 is a catalytic residue. Phosphothreonine; by ROCK1 is present on Thr-508.

The protein belongs to the protein kinase superfamily. TKL Ser/Thr protein kinase family. Self-associates to form homodimers. Interacts with HSP90AA1; this interaction promotes LIMK1 dimerization and subsequent transphosphorylation. Interacts with CDKN1C. Interacts (via LIM domain) with the cytoplasmic domain of NRG1. Interacts with NISCH. Interacts with SSH1. Interacts with RLIM and RNF6. Interacts (via LIM zinc-binding domains) with FAM89B/LRAP25 (via LRR repeat). Forms a tripartite complex with CDC42BPA, CDC42BPB and FAM89B/LRAP25. In terms of processing, autophosphorylated. Phosphorylated on Thr-508 by ROCK1 and PAK1, resulting in activation. Phosphorylated by PAK4 which increases the ability of LIMK1 to phosphorylate cofilin. Phosphorylated at Ser-323 by MAPKAPK2 during activation of VEGFA-induced signaling, which results in activation of LIMK1 and promotion of actin reorganization, cell migration, and tubule formation of endothelial cells. Dephosphorylated and inactivated by SSH1. Phosphorylated by CDC42BP. Ubiquitinated. 'Lys-48'-linked polyubiquitination by RNF6 leads to proteasomal degradation through the 26S proteasome, modulating LIMK1 levels in the growth cone and its effect on axonal outgrowth. Also polyubiquitinated by RLIM. In terms of tissue distribution, highest expression in the nervous system, particularly in the spinal cord and the cranial nerve and dorsal root ganglia.

It localises to the cytoplasm. The protein resides in the nucleus. Its subcellular location is the cytoskeleton. It is found in the cell projection. The protein localises to the lamellipodium. The enzyme catalyses L-seryl-[protein] + ATP = O-phospho-L-seryl-[protein] + ADP + H(+). It catalyses the reaction L-threonyl-[protein] + ATP = O-phospho-L-threonyl-[protein] + ADP + H(+). Functionally, serine/threonine-protein kinase that plays an essential role in the regulation of actin filament dynamics. Acts downstream of several Rho family GTPase signal transduction pathways. Activated by upstream kinases including ROCK1, PAK1 and PAK4, which phosphorylate LIMK1 on a threonine residue located in its activation loop. LIMK1 subsequently phosphorylates and inactivates the actin binding/depolymerizing factors cofilin-1/CFL1, cofilin-2/CFL2 and destrin/DSTN, thereby preventing the cleavage of filamentous actin (F-actin), and stabilizing the actin cytoskeleton. In this way LIMK1 regulates several actin-dependent biological processes including cell motility, cell cycle progression, and differentiation. Phosphorylates TPPP on serine residues, thereby promoting microtubule disassembly. Stimulates axonal outgrowth and may be involved in brain development. The sequence is that of LIM domain kinase 1 (Limk1) from Mus musculus (Mouse).